We begin with the raw amino-acid sequence, 480 residues long: Aspartyl/glutamyl-tRNA(Asn/Gln) amidotransferase subunit B (480 aa).

The protein belongs to the GatB/GatE family. GatB subfamily. As to quaternary structure, heterotrimer of A, B and C subunits.

It carries out the reaction L-glutamyl-tRNA(Gln) + L-glutamine + ATP + H2O = L-glutaminyl-tRNA(Gln) + L-glutamate + ADP + phosphate + H(+). The enzyme catalyses L-aspartyl-tRNA(Asn) + L-glutamine + ATP + H2O = L-asparaginyl-tRNA(Asn) + L-glutamate + ADP + phosphate + 2 H(+). In terms of biological role, allows the formation of correctly charged Asn-tRNA(Asn) or Gln-tRNA(Gln) through the transamidation of misacylated Asp-tRNA(Asn) or Glu-tRNA(Gln) in organisms which lack either or both of asparaginyl-tRNA or glutaminyl-tRNA synthetases. The reaction takes place in the presence of glutamine and ATP through an activated phospho-Asp-tRNA(Asn) or phospho-Glu-tRNA(Gln). This chain is Aspartyl/glutamyl-tRNA(Asn/Gln) amidotransferase subunit B, found in Streptococcus pneumoniae (strain ATCC 700669 / Spain 23F-1).